Here is a 119-residue protein sequence, read N- to C-terminus: Phosphoribosyl-AMP cyclohydrolase (119 aa).

Asp-77 is a binding site for Mg(2+). Cys-78 serves as a coordination point for Zn(2+). Mg(2+)-binding residues include Asp-79 and Asp-81. Zn(2+) contacts are provided by Cys-94 and Cys-101.

It belongs to the PRA-CH family. Homodimer. Requires Mg(2+) as cofactor. It depends on Zn(2+) as a cofactor.

It is found in the cytoplasm. The catalysed reaction is 1-(5-phospho-beta-D-ribosyl)-5'-AMP + H2O = 1-(5-phospho-beta-D-ribosyl)-5-[(5-phospho-beta-D-ribosylamino)methylideneamino]imidazole-4-carboxamide. It participates in amino-acid biosynthesis; L-histidine biosynthesis; L-histidine from 5-phospho-alpha-D-ribose 1-diphosphate: step 3/9. Its function is as follows. Catalyzes the hydrolysis of the adenine ring of phosphoribosyl-AMP. In Cereibacter sphaeroides (strain ATCC 17025 / ATH 2.4.3) (Rhodobacter sphaeroides), this protein is Phosphoribosyl-AMP cyclohydrolase.